Here is a 357-residue protein sequence, read N- to C-terminus: Histidinol-phosphate aminotransferase 1 (357 aa).

At Lys-217 the chain carries N6-(pyridoxal phosphate)lysine.

The protein belongs to the class-II pyridoxal-phosphate-dependent aminotransferase family. Histidinol-phosphate aminotransferase subfamily. As to quaternary structure, homodimer. Pyridoxal 5'-phosphate serves as cofactor.

The enzyme catalyses L-histidinol phosphate + 2-oxoglutarate = 3-(imidazol-4-yl)-2-oxopropyl phosphate + L-glutamate. It functions in the pathway amino-acid biosynthesis; L-histidine biosynthesis; L-histidine from 5-phospho-alpha-D-ribose 1-diphosphate: step 7/9. This is Histidinol-phosphate aminotransferase 1 from Burkholderia lata (strain ATCC 17760 / DSM 23089 / LMG 22485 / NCIMB 9086 / R18194 / 383).